We begin with the raw amino-acid sequence, 297 residues long: UDP-N-acetylenolpyruvoylglucosamine reductase (297 aa).

An FAD-binding PCMH-type domain is found at 26-191 (KSGGTADWLF…VAARFRGHPG (166 aa)). Arg-171 is a catalytic residue. Ser-220 (proton donor) is an active-site residue. Residue Glu-290 is part of the active site.

The protein belongs to the MurB family. The cofactor is FAD.

The protein localises to the cytoplasm. It carries out the reaction UDP-N-acetyl-alpha-D-muramate + NADP(+) = UDP-N-acetyl-3-O-(1-carboxyvinyl)-alpha-D-glucosamine + NADPH + H(+). It functions in the pathway cell wall biogenesis; peptidoglycan biosynthesis. Its function is as follows. Cell wall formation. The sequence is that of UDP-N-acetylenolpyruvoylglucosamine reductase from Novosphingobium aromaticivorans (strain ATCC 700278 / DSM 12444 / CCUG 56034 / CIP 105152 / NBRC 16084 / F199).